A 207-amino-acid polypeptide reads, in one-letter code: Large ribosomal subunit protein uL4 (207 aa).

The interval 44–76 (RRQGTQSTKTKSEVRGGGKKPWRQKGTGRARQG) is disordered. A compositionally biased stretch (basic residues) spans 60–71 (GGKKPWRQKGTG).

It belongs to the universal ribosomal protein uL4 family. In terms of assembly, part of the 50S ribosomal subunit.

Its function is as follows. One of the primary rRNA binding proteins, this protein initially binds near the 5'-end of the 23S rRNA. It is important during the early stages of 50S assembly. It makes multiple contacts with different domains of the 23S rRNA in the assembled 50S subunit and ribosome. Functionally, forms part of the polypeptide exit tunnel. The sequence is that of Large ribosomal subunit protein uL4 from Ruminiclostridium cellulolyticum (strain ATCC 35319 / DSM 5812 / JCM 6584 / H10) (Clostridium cellulolyticum).